A 315-amino-acid polypeptide reads, in one-letter code: Ribose-phosphate pyrophosphokinase (315 aa).

ATP is bound by residues 37–39 and 96–97; these read DGE and RQ. The Mg(2+) site is built by H131 and D170. K194 is a catalytic residue. Residues R196, D220, and 224 to 228 each bind D-ribose 5-phosphate; that span reads DTGGT.

It belongs to the ribose-phosphate pyrophosphokinase family. Class I subfamily. Homohexamer. The cofactor is Mg(2+).

It localises to the cytoplasm. It carries out the reaction D-ribose 5-phosphate + ATP = 5-phospho-alpha-D-ribose 1-diphosphate + AMP + H(+). Its pathway is metabolic intermediate biosynthesis; 5-phospho-alpha-D-ribose 1-diphosphate biosynthesis; 5-phospho-alpha-D-ribose 1-diphosphate from D-ribose 5-phosphate (route I): step 1/1. Involved in the biosynthesis of the central metabolite phospho-alpha-D-ribosyl-1-pyrophosphate (PRPP) via the transfer of pyrophosphoryl group from ATP to 1-hydroxyl of ribose-5-phosphate (Rib-5-P). The polypeptide is Ribose-phosphate pyrophosphokinase (Salmonella typhi).